Here is a 418-residue protein sequence, read N- to C-terminus: Queuine tRNA-ribosyltransferase accessory subunit 2 (418 aa).

Residues cysteine 325, cysteine 327, cysteine 330, and histidine 356 each coordinate Zn(2+).

It belongs to the queuine tRNA-ribosyltransferase family. QTRT2 subfamily. In terms of assembly, heterodimer of a catalytic subunit and an accessory subunit. Requires Zn(2+) as cofactor.

Its subcellular location is the cytoplasm. Functionally, non-catalytic subunit of the queuine tRNA-ribosyltransferase (TGT) that catalyzes the base-exchange of a guanine (G) residue with queuine (Q) at position 34 (anticodon wobble position) in tRNAs with GU(N) anticodons (tRNA-Asp, -Asn, -His and -Tyr), resulting in the hypermodified nucleoside queuosine (7-(((4,5-cis-dihydroxy-2-cyclopenten-1-yl)amino)methyl)-7-deazaguanosine). The sequence is that of Queuine tRNA-ribosyltransferase accessory subunit 2 from Drosophila melanogaster (Fruit fly).